We begin with the raw amino-acid sequence, 205 residues long: Adenylate kinase (205 aa).

Residue 10-15 (GAGKGT) coordinates ATP. The NMP stretch occupies residues 30–59 (STGDMLRAAVAQGSEVGKVAEGIMARGELV). AMP contacts are provided by residues threonine 31, arginine 36, 57–59 (ELV), 85–88 (GFPR), and glutamine 92. Residues 126-139 (TRAAETAGGPRADD) form an LID region. Position 127 (arginine 127) interacts with ATP. AMP-binding residues include arginine 136 and arginine 147. Lysine 175 serves as a coordination point for ATP.

It belongs to the adenylate kinase family. In terms of assembly, monomer.

It localises to the cytoplasm. It carries out the reaction AMP + ATP = 2 ADP. It functions in the pathway purine metabolism; AMP biosynthesis via salvage pathway; AMP from ADP: step 1/1. Catalyzes the reversible transfer of the terminal phosphate group between ATP and AMP. Plays an important role in cellular energy homeostasis and in adenine nucleotide metabolism. The chain is Adenylate kinase from Parvibaculum lavamentivorans (strain DS-1 / DSM 13023 / NCIMB 13966).